The chain runs to 638 residues: Fructose-1,6-bisphosphatase class 3 (638 aa).

It belongs to the FBPase class 3 family. Mn(2+) is required as a cofactor.

It carries out the reaction beta-D-fructose 1,6-bisphosphate + H2O = beta-D-fructose 6-phosphate + phosphate. The protein operates within carbohydrate biosynthesis; gluconeogenesis. In Pediococcus pentosaceus (strain ATCC 25745 / CCUG 21536 / LMG 10740 / 183-1w), this protein is Fructose-1,6-bisphosphatase class 3.